We begin with the raw amino-acid sequence, 228 residues long: Ribonuclease 3 (228 aa).

An RNase III domain is found at Leu5–Gly128. Mg(2+) is bound at residue Glu41. The active site involves Asp45. Positions 114 and 117 each coordinate Mg(2+). Glu117 is a catalytic residue. The DRBM domain maps to Asp155 to Gln225.

The protein belongs to the ribonuclease III family. Homodimer. It depends on Mg(2+) as a cofactor.

Its subcellular location is the cytoplasm. It carries out the reaction Endonucleolytic cleavage to 5'-phosphomonoester.. In terms of biological role, digests double-stranded RNA. Involved in the processing of primary rRNA transcript to yield the immediate precursors to the large and small rRNAs (23S and 16S). Processes some mRNAs, and tRNAs when they are encoded in the rRNA operon. Processes pre-crRNA and tracrRNA of type II CRISPR loci if present in the organism. In Alcanivorax borkumensis (strain ATCC 700651 / DSM 11573 / NCIMB 13689 / SK2), this protein is Ribonuclease 3.